We begin with the raw amino-acid sequence, 695 residues long: Elongation factor G 2 (695 aa).

Residues 5–280 (SLYRNIGIFA…AVVDYLPSPT (276 aa)) form the tr-type G domain. GTP contacts are provided by residues 14 to 21 (AHVDAGKT), 78 to 82 (DTPGH), and 132 to 135 (NKLD).

Belongs to the TRAFAC class translation factor GTPase superfamily. Classic translation factor GTPase family. EF-G/EF-2 subfamily.

The protein localises to the cytoplasm. Functionally, catalyzes the GTP-dependent ribosomal translocation step during translation elongation. During this step, the ribosome changes from the pre-translocational (PRE) to the post-translocational (POST) state as the newly formed A-site-bound peptidyl-tRNA and P-site-bound deacylated tRNA move to the P and E sites, respectively. Catalyzes the coordinated movement of the two tRNA molecules, the mRNA and conformational changes in the ribosome. The sequence is that of Elongation factor G 2 from Vibrio cholerae serotype O1 (strain ATCC 39315 / El Tor Inaba N16961).